We begin with the raw amino-acid sequence, 916 residues long: Translation initiation factor IF-2 (916 aa).

Residues 1–325 are disordered; sequence MTDSNDDKTL…QEKFRRSQVQ (325 aa). The span at 60-91 shows a compositional bias: low complexity; sequence ITPATPAAPVRAAEPAPAPAQARPQQSTPAPR. Over residues 97–108 the composition is skewed to polar residues; that stretch reads GQANQRPQQSYQ. Basic and acidic residues predominate over residues 125–182; that stretch reads SPEEMDARRRALAESQARDAQDAIRRAEEEKRRAAEEAVRKAAEAEEAARRAVEEAAR. Composition is skewed to low complexity over residues 183–209 and 229–243; these read QAEA…AEAR and DGAA…PAAV. The 168-residue stretch at 414–581 folds into the tr-type G domain; the sequence is SRPPVVTIMG…AVLLQAEILD (168 aa). A G1 region spans residues 423 to 430; the sequence is GHVDHGKT. 423 to 430 provides a ligand contact to GTP; that stretch reads GHVDHGKT. A G2 region spans residues 448 to 452; the sequence is GITQH. The tract at residues 469–472 is G3; sequence DTPG. GTP contacts are provided by residues 469–473 and 523–526; these read DTPGH and NKID. The tract at residues 523–526 is G4; sequence NKID. The interval 559 to 561 is G5; sequence SAK.

The protein belongs to the TRAFAC class translation factor GTPase superfamily. Classic translation factor GTPase family. IF-2 subfamily.

It localises to the cytoplasm. Its function is as follows. One of the essential components for the initiation of protein synthesis. Protects formylmethionyl-tRNA from spontaneous hydrolysis and promotes its binding to the 30S ribosomal subunits. Also involved in the hydrolysis of GTP during the formation of the 70S ribosomal complex. This Rhizobium etli (strain ATCC 51251 / DSM 11541 / JCM 21823 / NBRC 15573 / CFN 42) protein is Translation initiation factor IF-2.